Here is a 315-residue protein sequence, read N- to C-terminus: Tyrosine recombinase XerC (315 aa).

A Core-binding (CB) domain is found at 14-105 (PDLLNERQSW…GLRSLLHHLQ (92 aa)). A Tyr recombinase domain is found at 126 to 309 (SLPKPLTDRQ…DTARLLEIYD (184 aa)). Active-site residues include arginine 169, lysine 193, histidine 261, arginine 264, and histidine 287. Residue tyrosine 296 is the O-(3'-phospho-DNA)-tyrosine intermediate of the active site.

The protein belongs to the 'phage' integrase family. XerC subfamily. Forms a cyclic heterotetrameric complex composed of two molecules of XerC and two molecules of XerD.

It localises to the cytoplasm. Functionally, site-specific tyrosine recombinase, which acts by catalyzing the cutting and rejoining of the recombining DNA molecules. The XerC-XerD complex is essential to convert dimers of the bacterial chromosome into monomers to permit their segregation at cell division. It also contributes to the segregational stability of plasmids. The protein is Tyrosine recombinase XerC of Agrobacterium fabrum (strain C58 / ATCC 33970) (Agrobacterium tumefaciens (strain C58)).